The primary structure comprises 139 residues: Nucleoside diphosphate kinase (139 aa).

ATP contacts are provided by Lys10, Phe58, Arg86, Thr92, Arg103, and Asn113. His116 (pros-phosphohistidine intermediate) is an active-site residue.

It belongs to the NDK family. Homotetramer. Mg(2+) serves as cofactor.

The protein localises to the cytoplasm. It carries out the reaction a 2'-deoxyribonucleoside 5'-diphosphate + ATP = a 2'-deoxyribonucleoside 5'-triphosphate + ADP. It catalyses the reaction a ribonucleoside 5'-diphosphate + ATP = a ribonucleoside 5'-triphosphate + ADP. Functionally, major role in the synthesis of nucleoside triphosphates other than ATP. The ATP gamma phosphate is transferred to the NDP beta phosphate via a ping-pong mechanism, using a phosphorylated active-site intermediate. This Oleidesulfovibrio alaskensis (strain ATCC BAA-1058 / DSM 17464 / G20) (Desulfovibrio alaskensis) protein is Nucleoside diphosphate kinase.